A 929-amino-acid chain; its full sequence is uncharacterized protein (929 aa).

The segment at 1–257 is disordered; sequence MARKGKVNTL…SVLSSDDNDS (257 aa). Residues 23–34 show a composition bias toward basic and acidic residues; sequence KQLENKILHSYE. 5 stretches are compositionally biased toward acidic residues: residues 35–50, 59–75, 107–117, 133–144, and 188–220; these read EESA…DNDE, SEDD…DEED, LNEEDDSDDSV, DENELVDLDTLL, and SESE…DGEN. Residues Ser251, Ser555, and Ser557 each carry the phosphoserine modification. The interval 602–729 is disordered; the sequence is DEMQAFEDEL…KADKKNHKLK (128 aa). The segment covering 605–619 has biased composition (acidic residues); it reads QAFEDELAGVPNEDD. Positions 670-681 are enriched in basic and acidic residues; it reads NKPEMKEGQKKA. The span at 696–711 shows a compositional bias: polar residues; it reads ETNPWLQVPDQRTSSA. Residues 712–729 show a composition bias toward basic and acidic residues; the sequence is KKLDKNSSKADKKNHKLK. A phosphoserine mark is found at Ser758, Ser760, and Ser764. Residues 805 to 820 show a composition bias toward basic and acidic residues; the sequence is KEDWVQEDAPKEEDHS. The segment at 805–843 is disordered; the sequence is KEDWVQEDAPKEEDHSLPGWGSWGGVGVKQRKTKPKVKK. Residues 833 to 843 show a composition bias toward basic residues; that stretch reads KQRKTKPKVKK.

The protein to yeast YML093w.

Its subcellular location is the nucleus. It localises to the nucleolus. This is an uncharacterized protein from Schizosaccharomyces pombe (strain 972 / ATCC 24843) (Fission yeast).